The following is a 203-amino-acid chain: Nucleoside triphosphate pyrophosphatase (203 aa).

Residue Asp-78 is the Proton acceptor of the active site.

The protein belongs to the Maf family. Requires a divalent metal cation as cofactor.

The protein resides in the cytoplasm. The enzyme catalyses a ribonucleoside 5'-triphosphate + H2O = a ribonucleoside 5'-phosphate + diphosphate + H(+). The catalysed reaction is a 2'-deoxyribonucleoside 5'-triphosphate + H2O = a 2'-deoxyribonucleoside 5'-phosphate + diphosphate + H(+). Nucleoside triphosphate pyrophosphatase. May have a dual role in cell division arrest and in preventing the incorporation of modified nucleotides into cellular nucleic acids. The polypeptide is Nucleoside triphosphate pyrophosphatase (Prochlorococcus marinus (strain AS9601)).